The primary structure comprises 485 residues: Regulatory protein ViaA (485 aa).

The protein belongs to the ViaA family. In terms of assembly, homodimer. Interacts with RavA.

The protein resides in the cytoplasm. Its function is as follows. Component of the RavA-ViaA chaperone complex, which may act on the membrane to optimize the function of some of the respiratory chains. ViaA stimulates the ATPase activity of RavA. The polypeptide is Regulatory protein ViaA (Photorhabdus laumondii subsp. laumondii (strain DSM 15139 / CIP 105565 / TT01) (Photorhabdus luminescens subsp. laumondii)).